The chain runs to 342 residues: Trans-3-hydroxy-L-proline dehydratase (342 aa).

S90 functions as the Proton acceptor in the catalytic mechanism. Substrate-binding positions include 91–92, D251, and 256–257; these read GS and GT.

Belongs to the proline racemase family.

It carries out the reaction trans-3-hydroxy-L-proline = 1-pyrroline-2-carboxylate + H2O. Catalyzes the dehydration of trans-3-hydroxy-L-proline (t3LHyp) to Delta(1)-pyrroline-2-carboxylate (Pyr2C). Is likely involved in a degradation pathway that converts t3LHyp to L-proline, which would allow P.denitrificans to grow on t3LHyp as a sole carbon source. Displays neither proline racemase activity nor 4-hydroxyproline 2-epimerase activity. This is Trans-3-hydroxy-L-proline dehydratase from Paracoccus denitrificans (strain Pd 1222).